The sequence spans 50 residues: Conotoxin Bu13 (50 aa).

Residue Ala-1 is a signal peptide. A propeptide spanning residues 2–24 (EDSRGTQLHRALRKTTKLSLSIR) is cleaved from the precursor. Disulfide bonds link Cys-25-Cys-40, Cys-32-Cys-44, and Cys-39-Cys-49.

It belongs to the conotoxin O1 superfamily. In terms of tissue distribution, expressed by the venom duct.

It is found in the secreted. This is Conotoxin Bu13 from Conus bullatus (Bubble cone).